Reading from the N-terminus, the 203-residue chain is CASP-like protein 5A2 (203 aa).

The Cytoplasmic portion of the chain corresponds to 1 to 63; that stretch reads MRASRPVVHP…KDPPGAPGTP (63 aa). The interval 39–58 is disordered; the sequence is AAHGGENAQPRGVRMKDPPG. The helical transmembrane segment at 64–84 threads the bilayer; that stretch reads GGLGLRLVQAFFAAAALAVMA. Topologically, residues 85 to 94 are extracellular; it reads STDDFPSVSA. A helical transmembrane segment spans residues 95–115; sequence FCYLVAAAILQCLWSLSLAVV. Over 116 to 139 the chain is Cytoplasmic; it reads DIYALLVKRSLRNPQAVCIFTIGD. A helical transmembrane segment spans residues 140 to 160; that stretch reads GITGTLTLGAACASAGITVLI. The Extracellular portion of the chain corresponds to 161-177; sequence GNDLNICANNHCASFET. Residues 178–198 form a helical membrane-spanning segment; it reads ATAMAFISWFALAPSCVLNFW. At 199–203 the chain is on the cytoplasmic side; that stretch reads SMASR.

The protein belongs to the Casparian strip membrane proteins (CASP) family. Homodimer and heterodimers.

Its subcellular location is the cell membrane. The polypeptide is CASP-like protein 5A2 (Oryza sativa subsp. indica (Rice)).